A 456-amino-acid polypeptide reads, in one-letter code: tRNA-2-methylthio-N(6)-dimethylallyladenosine synthase (456 aa).

The 119-residue stretch at 19–137 folds into the MTTase N-terminal domain; the sequence is KHFFIETWGC…FPEYLHRVQV (119 aa). Residues Cys28, Cys64, Cys98, Cys174, Cys178, and Cys181 each coordinate [4Fe-4S] cluster. The region spanning 160-392 is the Radical SAM core domain; the sequence is RKSNVKAFVT…AVNEGIVVGN (233 aa). Positions 393–456 constitute a TRAM domain; that stretch reads KAAEGKIYEV…SFSLVGEVVE (64 aa).

It belongs to the methylthiotransferase family. MiaB subfamily. In terms of assembly, monomer. It depends on [4Fe-4S] cluster as a cofactor.

The protein resides in the cytoplasm. The enzyme catalyses N(6)-dimethylallyladenosine(37) in tRNA + (sulfur carrier)-SH + AH2 + 2 S-adenosyl-L-methionine = 2-methylsulfanyl-N(6)-dimethylallyladenosine(37) in tRNA + (sulfur carrier)-H + 5'-deoxyadenosine + L-methionine + A + S-adenosyl-L-homocysteine + 2 H(+). Its function is as follows. Catalyzes the methylthiolation of N6-(dimethylallyl)adenosine (i(6)A), leading to the formation of 2-methylthio-N6-(dimethylallyl)adenosine (ms(2)i(6)A) at position 37 in tRNAs that read codons beginning with uridine. This Clostridium botulinum (strain Eklund 17B / Type B) protein is tRNA-2-methylthio-N(6)-dimethylallyladenosine synthase.